A 467-amino-acid polypeptide reads, in one-letter code: Repressible acid phosphatase (467 aa).

The N-terminal stretch at 1–17 is a signal peptide; the sequence is MFKSVVYSILAASLANA. Residue His75 is the Nucleophile of the active site. Residues Asn97, Asn103, Asn162, Asn192, Asn250, and Asn315 are each glycosylated (N-linked (GlcNAc...) asparagine). Asp338 acts as the Proton donor in catalysis. Asn356, Asn390, Asn439, Asn445, Asn456, and Asn461 each carry an N-linked (GlcNAc...) asparagine glycan.

It belongs to the histidine acid phosphatase family. Post-translationally, glycosylated during secretion across the membrane.

It localises to the secreted. The enzyme catalyses a phosphate monoester + H2O = an alcohol + phosphate. Partially mediates extracellular nucleotide derived phosphate hydrolysis along with NPP1 and NPP2. The protein is Repressible acid phosphatase (PHO5) of Saccharomyces cerevisiae (strain ATCC 204508 / S288c) (Baker's yeast).